Reading from the N-terminus, the 281-residue chain is Pantothenate synthetase (281 aa).

Position 31-38 (31-38 (MGNLHAGH)) interacts with ATP. The Proton donor role is filled by H38. Q62 is a binding site for (R)-pantoate. Q62 is a beta-alanine binding site. 150–153 (GKKD) lines the ATP pocket. A (R)-pantoate-binding site is contributed by Q156. ATP contacts are provided by residues V179 and 187-190 (MSSR).

Belongs to the pantothenate synthetase family. Homodimer.

The protein resides in the cytoplasm. It carries out the reaction (R)-pantoate + beta-alanine + ATP = (R)-pantothenate + AMP + diphosphate + H(+). The protein operates within cofactor biosynthesis; (R)-pantothenate biosynthesis; (R)-pantothenate from (R)-pantoate and beta-alanine: step 1/1. Catalyzes the condensation of pantoate with beta-alanine in an ATP-dependent reaction via a pantoyl-adenylate intermediate. This Xylella fastidiosa (strain M23) protein is Pantothenate synthetase.